We begin with the raw amino-acid sequence, 87 residues long: U3-theraphotoxin-Hhn1l (87 aa).

Positions 1-24 (MVNMKASMFLTFAGLVLLFVVCYA) are cleaved as a signal peptide. The propeptide occupies 25–52 (SESEEKEFPKEMLSSIFAVDNDFKQEER). Intrachain disulfides connect Cys-54/Cys-67, Cys-61/Cys-72, and Cys-66/Cys-79.

This sequence belongs to the neurotoxin 10 (Hwtx-1) family. 51 (Hntx-8) subfamily. Hntx-8 sub-subfamily. Expressed by the venom gland.

The protein resides in the secreted. Its function is as follows. Ion channel inhibitor. This is U3-theraphotoxin-Hhn1l from Cyriopagopus hainanus (Chinese bird spider).